A 132-amino-acid chain; its full sequence is Glycine cleavage system H protein (132 aa).

Residues 24–106 (TVRVGLTDFA…YGAGWLLDVH (83 aa)) form the Lipoyl-binding domain. At Lys-65 the chain carries N6-lipoyllysine.

The protein belongs to the GcvH family. As to quaternary structure, the glycine cleavage system is composed of four proteins: P, T, L and H. (R)-lipoate serves as cofactor.

The glycine cleavage system catalyzes the degradation of glycine. The H protein shuttles the methylamine group of glycine from the P protein to the T protein. This Mycobacterium leprae (strain Br4923) protein is Glycine cleavage system H protein.